The following is a 505-amino-acid chain: Retinoic acid receptor gamma (505 aa).

Disordered regions lie at residues 1–57 and 113–134; these read MMKF…SSKD and SLSV…PSPP. Basic and acidic residues-rich tracts occupy residues 12 to 22 and 32 to 46; these read DGGERPEEEGK and MGKE…KEEA. The modulating stretch occupies residues 52-142; sequence MSSSKDRICS…PPPPPRVYKP (91 aa). Residues 115–124 are compositionally biased toward polar residues; sequence SVETQSTSSE. 2 consecutive NR C4-type zinc fingers follow at residues 143 to 163 and 179 to 203; these read CFVC…CEGC and CHRD…LQKC. Positions 143-208 form a DNA-binding region, nuclear receptor; the sequence is CFVCNDKSSG…RLQKCFEVGM (66 aa). Positions 209–237 are hinge; the sequence is SKEAVRNDRNKKKKEIKEEVVTDSYEMPP. An NR LBD domain is found at 238–472; sequence EMEALIQKVS…PLIREMLENP (235 aa). Residues 462–505 form a disordered region; that stretch reads PPLIREMLENPEAFEDDASPPPKSEQKPIKVEEKPGEKTSTKDP. The span at 485 to 505 shows a compositional bias: basic and acidic residues; sequence SEQKPIKVEEKPGEKTSTKDP.

The protein belongs to the nuclear hormone receptor family. NR1 subfamily. As to quaternary structure, heterodimer; with a RXR molecule. Binds DNA preferentially as a RAR/RXR heterodimer. In terms of tissue distribution, isoform Delta-1A and Isoform Delta-1B are most abundant in regenerating limbs, tails, and the anterior half of the lower jaw. Isoform Delta-2 is broadly and uniformly distributed.

It is found in the nucleus. Functionally, receptor for retinoic acid. Retinoic acid receptors bind as heterodimers to their target response elements in response to their ligands, all-trans or 9-cis retinoic acid, and regulate gene expression in various biological processes. The RAR/RXR heterodimers bind to the retinoic acid response elements (RARE) composed of tandem 5'-AGGTCA-3' sites known as DR1-DR5. This Notophthalmus viridescens (Eastern newt) protein is Retinoic acid receptor gamma (RARG).